Reading from the N-terminus, the 202-residue chain is Alpha-latrotoxin-Lm1a (202 aa).

10 ANK repeats span residues 95–109 (LYNA…VGFK), 110–120 (LMESPEININE), 122–132 (NDWPVASTLLR), 133–138 (SSNVNV), 142–161 (NSDT…DINT), 163–170 (NGHLNIVK), 171–182 (YLVEEEDLSVDG), K184, 185–191 (YGIDMTI), and 193–202 (TALDIATDLK). The tract at residues 175–181 (EEDLSVD) is 4C4.1 epitope.

This sequence belongs to the cationic peptide 01 (latrotoxin) family. 03 (alpha-latrotoxin) subfamily. As to quaternary structure, homotetramer in membranes. Post-translationally, processed by furin-like proteases at both the N- and C-termini. In terms of processing, contains 1 disulfide bond. Expressed in venom gland, cephalothorax, and abdomen tissues from both males and females.

It localises to the secreted. It is found in the target cell membrane. Presynaptic neurotoxin that causes massive release of neurotransmitters from vertebrate (but not invertebrate) nerve terminals and endocrine cells via a complex mechanism involving activation of receptor(s) and toxin insertion into the plasma membrane with subsequent pore formation. Binds to neurexin-1-alpha (NRXN1) in a calcium dependent manner, adhesion G protein-coupled receptor L1 (ADGRL1, also termed latrophilin-1 and calcium-independent receptor of latrotoxin (CIRL)), and receptor-type tyrosine-protein phosphatase S (PTPRS), also termed PTP sigma. NRXN1 and PTPRS are suggested to provide a platform for binding and subsequent pore formation events. In contrast, binding to ADGRL1 does not involve oligomerization and channel formation, but direct downstream stimulation of the synaptic fusion machinery. This Latrodectus mactans (Black widow spider) protein is Alpha-latrotoxin-Lm1a.